A 466-amino-acid polypeptide reads, in one-letter code: Histidinol dehydrogenase, chloroplastic (466 aa).

The N-terminal 30 residues, 1–30 (MSLNLSRLSLLSSPRISISTHAPRKGYVCC), are a transit peptide targeting the chloroplast. 3 residues coordinate NAD(+): Y155, Q217, and N240. 3 residues coordinate substrate: S266, Q288, and H291. Q288 and H291 together coordinate Zn(2+). Residues E356 and H357 each act as proton acceptor in the active site. Substrate contacts are provided by H357, D390, E444, and H449. Residue D390 participates in Zn(2+) binding. Position 449 (H449) interacts with Zn(2+).

Belongs to the histidinol dehydrogenase family. It depends on Zn(2+) as a cofactor.

The protein localises to the plastid. It is found in the chloroplast. The catalysed reaction is L-histidinol + 2 NAD(+) + H2O = L-histidine + 2 NADH + 3 H(+). It functions in the pathway amino-acid biosynthesis; L-histidine biosynthesis; L-histidine from 5-phospho-alpha-D-ribose 1-diphosphate: step 9/9. Functionally, catalyzes the sequential NAD-dependent oxidations of L-histidinol to L-histidinaldehyde and then to L-histidine. This chain is Histidinol dehydrogenase, chloroplastic (HISN8), found in Arabidopsis thaliana (Mouse-ear cress).